Reading from the N-terminus, the 571-residue chain is WAP, Kazal, immunoglobulin, Kunitz and NTR domain-containing protein 2 (571 aa).

The signal sequence occupies residues 1-29 (MCAPGYHRFWFHWGLLLLLLLEAPLRGLA). The WAP domain maps to 34-87 (RYSHAGICPNDMNPNLWVDAQSTCKRECETDQECETYEKCCPNVCGTKSCVAAR). 8 disulfides stabilise this stretch: C41/C74, C57/C78, C61/C73, C67/C83, C129/C159, C133/C152, C141/C170, and C226/C282. Positions 121-172 (WDGQPVCKCKDRCEKEPSFTCASDGLTYYNRCFMDAEACSKGITLSVVTCRY) constitute a Kazal-like domain. In terms of domain architecture, Ig-like C2-type spans 205 to 298 (PALLNHPVHQ…GVLRADFPLS (94 aa)). N-linked (GlcNAc...) asparagine glycosylation is present at N314. Disulfide bonds link C323–C373, C332–C356, C348–C369, C381–C431, C390–C414, C406–C427, C440–C510, C443–C512, and C454–C561. BPTI/Kunitz inhibitor domains follow at residues 323–373 (CLKP…MLAC) and 381–431 (CSLP…EESC). The region spanning 440 to 561 (CRACKPRQKL…LREVMYKKTC (122 aa)) is the NTR domain. N-linked (GlcNAc...) asparagine glycosylation is present at N514.

Belongs to the WFIKKN family. In terms of assembly, interacts with both mature and propeptide myostatin/MSTN. Widely expressed, with high expression in skeletal muscle and heart. Also expressed in brain, lung and testis. Weakly expressed in liver and kidney.

It is found in the secreted. Protease-inhibitor that contains multiple distinct protease inhibitor domains. Probably has serine protease- and metalloprotease-inhibitor activity. Inhibits the biological activity of mature myostatin, but not activin. The chain is WAP, Kazal, immunoglobulin, Kunitz and NTR domain-containing protein 2 (Wfikkn2) from Mus musculus (Mouse).